The sequence spans 405 residues: DNA primase DnaG (405 aa).

The Toprim domain occupies 172-248; sequence DAIIIVEGRA…HVDYIARAPP (77 aa). Residues Glu178, Asp222, and Asp224 each coordinate Mg(2+). Residues 279 to 303 form a disordered region; that stretch reads ASGERAEAPPQPAQQPQQEQPAPQR. The segment covering 292–303 has biased composition (low complexity); that stretch reads QQPQQEQPAPQR.

This sequence belongs to the archaeal DnaG primase family. As to quaternary structure, forms a ternary complex with MCM helicase and DNA. Component of the archaeal exosome complex. It depends on Mg(2+) as a cofactor.

The enzyme catalyses ssDNA + n NTP = ssDNA/pppN(pN)n-1 hybrid + (n-1) diphosphate.. Functionally, RNA polymerase that catalyzes the synthesis of short RNA molecules used as primers for DNA polymerase during DNA replication. Also part of the exosome, which is a complex involved in RNA degradation. Acts as a poly(A)-binding protein that enhances the interaction between heteromeric, adenine-rich transcripts and the exosome. The polypeptide is DNA primase DnaG (Pyrobaculum arsenaticum (strain DSM 13514 / JCM 11321 / PZ6)).